An 86-amino-acid polypeptide reads, in one-letter code: MANIKSQVKRIRTNEAARLRNQSVKSSLRTAIRSFREAAAAGDKDKANELLVATSRKLDKAASKGVIHANQAANKKSALAQAVNKI.

It belongs to the bacterial ribosomal protein bS20 family.

Its function is as follows. Binds directly to 16S ribosomal RNA. This is Small ribosomal subunit protein bS20 from Rhodococcus opacus (strain B4).